Reading from the N-terminus, the 514-residue chain is Uronyl 2-sulfotransferase homolog pip (514 aa).

Residues M1–R30 lie on the Cytoplasmic side of the membrane. The chain crosses the membrane as a helical; Signal-anchor for type II membrane protein span at residues S31 to T50. Over N51 to Y514 the chain is Lumenal. A compositionally biased stretch (basic and acidic residues) spans H112–L121. Residues H112–D185 form a disordered region. Basic residues predominate over residues H127–M140. Basic and acidic residues predominate over residues H155 to E170. Positions V171–D185 are enriched in acidic residues. N-linked (GlcNAc...) asparagine glycosylation is present at N207. The active site involves H282. 4 N-linked (GlcNAc...) asparagine glycosylation sites follow: N287, N416, N451, and N467.

The protein belongs to the sulfotransferase 3 family. In terms of assembly, interacts with wbl/windbeutel; the interaction is direct and does not require pip to be folded. In terms of tissue distribution, ovary-specific. Specifically expressed in the ventral follicle cells of stage 9-10 egg chambers. Expressed in ovaries. Specifically expressed in the ventral follicle cells of stage 9-10 egg chambers.

It is found in the golgi apparatus membrane. In terms of biological role, sulfotransferase involved in dorsoventral axis patterning in early embryos. Required for the ventral activation of ea/easter by the protease snk in the perivitelline space between the embryonic membrane and the eggshell; activation of ea requires both activation of the ndl-gd-snk protease cascade and sulfation of a vitelline membrane component by pip. Probably acts by mediating the sulfation of some glycoprotein or glycosaminoglycan stably deposited in the vitelline membrane, whose ventrally localized modification leads to spatially restricted activation of the protease cascade resulting in localized activation of the spz Toll receptor ligand by ea. Functionally, probably required redundantly with isoform H for dorsoventral axis patterning in embryos. Lacks 2-O-sulfotransferase activity towards completely desulfated N-sulfated (CDSNS) heparin, chondroitin, and chondroitin sulfate A, B (dermatan sulfate), and C. Sulfates several components of the eggshell vitelline membrane, including Vml, Vm26Aa, Vm32E and psd/palisade/Fcp26Aa. Probably required redundantly with isoform A for dorsoventral axis patterning in embryos. Its function is as follows. Lacks 2-O-sulfotransferase activity towards CDSNS heparin, chondroitin, and chondroitin sulfate A, B (dermatan sulfate), and C. The polypeptide is Uronyl 2-sulfotransferase homolog pip (Drosophila melanogaster (Fruit fly)).